Here is a 262-residue protein sequence, read N- to C-terminus: Nurim (262 aa).

The Nuclear portion of the chain corresponds to 1–4 (MAPA). The chain crosses the membrane as a helical span at residues 5-28 (LLLVPAALASFILAFGTGVEFVRF). Residues 29–58 (TSLRPLLGGIPESGGPDARQGWLAALQDQS) lie on the Perinuclear space side of the membrane. A helical transmembrane segment spans residues 59–80 (ILVPLAWDLGLLLLFVGQHSLM). Over 81–97 (ATETVKAWMSRYFGVLQ) the chain is Nuclear. The chain crosses the membrane as a helical span at residues 98–114 (RSLYVACTALALQLVMR). Residues 115–133 (YWEPVPRGPVLWEAQAEPW) lie on the Perinuclear space side of the membrane. The chain crosses the membrane as a helical span at residues 134–164 (ATWVPLLCFVLHVISWLLIFSILLVFDYAEL). Residues 165 to 191 (MGLKQVYYHVLGLGEPLALKSPRALRL) are Nuclear-facing. A helical transmembrane segment spans residues 192-210 (FSHLRHPVCVELLTVLWVV). Residues 211–216 (PTLGTD) lie on the Perinuclear space side of the membrane. Residues 217–234 (RLLLALLLTLYLGLAHGL) form a helical membrane-spanning segment. The Nuclear segment spans residues 235–262 (DQQDLRYLRAQLQRKLHLLSRPQDGEAE).

This sequence belongs to the nurim family.

It is found in the nucleus inner membrane. This chain is Nurim (NRM), found in Sus scrofa (Pig).